A 140-amino-acid polypeptide reads, in one-letter code: MLGEFRQFIARGNVMDLAVGVIIGGAFATITGSLTEDVIMPLVGALFGGVDFSNRFILLGSVPDGMSATDYAALKEAGVAMIGYGAFVTAVINFLILAFIIFLLVRWVNKVVRKPEADASPAGPSEVDLLTEIRDELRRK.

2 helical membrane-spanning segments follow: residues 14–34 (VMDL…TGSL) and 85–105 (GAFV…FLLV).

The protein belongs to the MscL family. As to quaternary structure, homopentamer.

Its subcellular location is the cell inner membrane. Channel that opens in response to stretch forces in the membrane lipid bilayer. May participate in the regulation of osmotic pressure changes within the cell. The chain is Large-conductance mechanosensitive channel from Sphingopyxis alaskensis (strain DSM 13593 / LMG 18877 / RB2256) (Sphingomonas alaskensis).